Reading from the N-terminus, the 338-residue chain is Tetraacyldisaccharide 4'-kinase (338 aa).

Val53–Thr60 lines the ATP pocket.

It belongs to the LpxK family.

The enzyme catalyses a lipid A disaccharide + ATP = a lipid IVA + ADP + H(+). Its pathway is glycolipid biosynthesis; lipid IV(A) biosynthesis; lipid IV(A) from (3R)-3-hydroxytetradecanoyl-[acyl-carrier-protein] and UDP-N-acetyl-alpha-D-glucosamine: step 6/6. Functionally, transfers the gamma-phosphate of ATP to the 4'-position of a tetraacyldisaccharide 1-phosphate intermediate (termed DS-1-P) to form tetraacyldisaccharide 1,4'-bis-phosphate (lipid IVA). The polypeptide is Tetraacyldisaccharide 4'-kinase (Polaromonas sp. (strain JS666 / ATCC BAA-500)).